A 444-amino-acid chain; its full sequence is Platelet-activating factor acetylhydrolase (444 aa).

The first 21 residues, methionine 1–proline 21, serve as a signal peptide directing secretion. N-linked (GlcNAc...) asparagine glycans are attached at residues asparagine 60 and asparagine 200. Serine 274 acts as the Nucleophile in catalysis. Catalysis depends on charge relay system residues aspartate 297 and histidine 352. Residues asparagine 424 and asparagine 434 are each glycosylated (N-linked (GlcNAc...) asparagine).

It belongs to the AB hydrolase superfamily. Lipase family. Post-translationally, N-glycosylated. In terms of tissue distribution, plasma.

The protein resides in the secreted. The protein localises to the extracellular space. The catalysed reaction is a 1-O-alkyl-2-acetyl-sn-glycero-3-phosphocholine + H2O = a 1-O-alkyl-sn-glycero-3-phosphocholine + acetate + H(+). It catalyses the reaction 1-O-decyl-2-acetyl-sn-glycero-3-phosphocholine + H2O = 1-O-decyl-sn-glycero-3-phosphocholine + acetate + H(+). The enzyme catalyses 1-O-dodecyl-2-acetyl-sn-glycero-3-phosphocholine + H2O = 1-O-dodecyl-sn-glycero-3-phosphocholine + acetate + H(+). It carries out the reaction 1-O-tetradecyl-2-acetyl-sn-glycero-3-phosphocholine + H2O = 1-O-tetradecyl-sn-glycero-3-phosphocholine + acetate + H(+). The catalysed reaction is 1-O-hexadecyl-2-acetyl-sn-glycero-3-phosphocholine + H2O = 1-O-hexadecyl-sn-glycero-3-phosphocholine + acetate + H(+). It catalyses the reaction 1-O-octadecyl-2-acetyl-sn-glycero-3-phosphocholine + H2O = 1-O-octadecyl-sn-glycero-3-phosphocholine + acetate + H(+). The enzyme catalyses 1-hexadecanoyl-2-acetyl-sn-glycero-3-phosphocholine + H2O = 1-hexadecanoyl-sn-glycero-3-phosphocholine + acetate + H(+). It carries out the reaction 1-hexadecanoyl-2-propionyl-sn-glycero-3-phosphocholine + H2O = propanoate + 1-hexadecanoyl-sn-glycero-3-phosphocholine + H(+). The catalysed reaction is 1-hexadecanoyl-2-butanoyl-sn-glycero-3-phosphocholine + H2O = butanoate + 1-hexadecanoyl-sn-glycero-3-phosphocholine + H(+). It catalyses the reaction 1-hexadecanoyl-2-pentanoyl-sn-glycero-3-phosphocholine + H2O = pentanoate + 1-hexadecanoyl-sn-glycero-3-phosphocholine + H(+). The enzyme catalyses 1-hexadecanoyl-2-glutaroyl-sn-glycero-3-phosphocholine + H2O = glutarate + 1-hexadecanoyl-sn-glycero-3-phosphocholine + H(+). It carries out the reaction 1-hexadecanoyl-2-(5-oxopentanoyl)-sn-glycero-3-phosphocholine + H2O = 5-oxopentanoate + 1-hexadecanoyl-sn-glycero-3-phosphocholine + H(+). The catalysed reaction is 1-hexadecanoyl-2-(9-oxononanoyl)-sn-glycero-3-phosphocholine + H2O = 9-oxononanoate + 1-hexadecanoyl-sn-glycero-3-phosphocholine + H(+). It catalyses the reaction 1-hexadecanoyl-2-[9-hydroperoxy-(10E-octadecenoyl)]-sn-glycero-3-phosphocholine + H2O = 9-hydroperoxy-10E-octadecenoate + 1-hexadecanoyl-sn-glycero-3-phosphocholine + H(+). The enzyme catalyses 1-hexadecanoyl-2-(10-hydroperoxy-8E-octadecenoyl)-sn-glycero-3-phosphocholine + H2O = 10-hydroperoxy-(8E)-octadecenoate + 1-hexadecanoyl-sn-glycero-3-phosphocholine + H(+). In terms of biological role, lipoprotein-associated calcium-independent phospholipase A2 involved in phospholipid catabolism during inflammatory and oxidative stress response. At the lipid-aqueous interface, hydrolyzes the ester bond of fatty acyl group attached at sn-2 position of phospholipids (phospholipase A2 activity). Specifically targets phospholipids with a short-chain fatty acyl group at sn-2 position. Can hydrolyze phospholipids with long fatty acyl chains, only if they carry oxidized functional groups. Hydrolyzes and inactivates platelet-activating factor (PAF, 1-O-alkyl-2-acetyl-sn-glycero-3-phosphocholine), a potent pro-inflammatory signaling lipid that acts through PTAFR on various innate immune cells. Hydrolyzes oxidatively truncated phospholipids carrying an aldehyde group at omega position, preventing their accumulation in low-density lipoprotein (LDL) particles and uncontrolled pro-inflammatory effects. As part of high-density lipoprotein (HDL) particles, can hydrolyze phospholipids having long-chain fatty acyl hydroperoxides at sn-2 position and protect against potential accumulation of these oxylipins in the vascular wall. Catalyzes the release from membrane phospholipids of F2-isoprostanes, lipid biomarkers of cellular oxidative damage. The sequence is that of Platelet-activating factor acetylhydrolase (PLA2G7) from Bos taurus (Bovine).